A 249-amino-acid polypeptide reads, in one-letter code: 2-C-methyl-D-erythritol 4-phosphate cytidylyltransferase (249 aa).

It belongs to the IspD/TarI cytidylyltransferase family. IspD subfamily.

The catalysed reaction is 2-C-methyl-D-erythritol 4-phosphate + CTP + H(+) = 4-CDP-2-C-methyl-D-erythritol + diphosphate. It participates in isoprenoid biosynthesis; isopentenyl diphosphate biosynthesis via DXP pathway; isopentenyl diphosphate from 1-deoxy-D-xylulose 5-phosphate: step 2/6. Its function is as follows. Catalyzes the formation of 4-diphosphocytidyl-2-C-methyl-D-erythritol from CTP and 2-C-methyl-D-erythritol 4-phosphate (MEP). This is 2-C-methyl-D-erythritol 4-phosphate cytidylyltransferase from Chromohalobacter salexigens (strain ATCC BAA-138 / DSM 3043 / CIP 106854 / NCIMB 13768 / 1H11).